The sequence spans 542 residues: Probable serine/threonine-protein kinase ndrB (542 aa).

The interval 1–52 (MNVERKLESLSLQQQQQEEQQDESEQPNQGVEDEEEEEYDEEEYEEEEEDIN) is disordered. A compositionally biased stretch (low complexity) spans 9–18 (SLSLQQQQQE). Positions 19–51 (EQQDESEQPNQGVEDEEEEEYDEEEYEEEEEDI) are enriched in acidic residues. In terms of domain architecture, Protein kinase spans 130–437 (FESIRIIGRG…VEEIQSHPFF (308 aa)). Residues 136–144 (IGRGAFGEV) and lysine 159 contribute to the ATP site. Residue aspartate 258 is the Proton acceptor of the active site. One can recognise an AGC-kinase C-terminal domain in the interval 438–510 (KGVDWRRLRE…RNFDAMRDAF (73 aa)). Residues 452 to 486 (IIPQLSSPTDTSNFDHYEEEQQPEPMQPVQSKSRR) form a disordered region. Positions 455-465 (QLSSPTDTSNF) are enriched in polar residues.

It belongs to the protein kinase superfamily. AGC Ser/Thr protein kinase family.

The protein resides in the cytoplasm. The enzyme catalyses L-seryl-[protein] + ATP = O-phospho-L-seryl-[protein] + ADP + H(+). It catalyses the reaction L-threonyl-[protein] + ATP = O-phospho-L-threonyl-[protein] + ADP + H(+). The sequence is that of Probable serine/threonine-protein kinase ndrB (ndrB) from Dictyostelium discoideum (Social amoeba).